The following is a 210-amino-acid chain: Small ribosomal subunit protein uS3 (210 aa).

Positions 38 to 106 constitute a KH type-2 domain; it reads IRQFLKKRLY…EVFININEVR (69 aa).

The protein belongs to the universal ribosomal protein uS3 family. As to quaternary structure, part of the 30S ribosomal subunit. Forms a tight complex with proteins S10 and S14.

Binds the lower part of the 30S subunit head. Binds mRNA in the 70S ribosome, positioning it for translation. This chain is Small ribosomal subunit protein uS3, found in Trichlorobacter lovleyi (strain ATCC BAA-1151 / DSM 17278 / SZ) (Geobacter lovleyi).